Reading from the N-terminus, the 653-residue chain is Sodium-dependent nutrient amino acid transporter 1 (653 aa).

The disordered stretch occupies residues 1-55 (MELKGVHQQNGTSNGTGAAGTEGESPPPAPAPATAEAAASLETTTEKVDAEQQKT). Residues 1 to 59 (MELKGVHQQNGTSNGTGAAGTEGESPPPAPAPATAEAAASLETTTEKVDAEQQKTERTN) lie on the Cytoplasmic side of the membrane. Composition is skewed to low complexity over residues 10 to 24 (NGTSNGTGAAGTEGE) and 32 to 43 (PATAEAAASLET). A compositionally biased stretch (basic and acidic residues) spans 44–55 (TTEKVDAEQQKT). 4 helical membrane passes run 60 to 80 (WGNGLEFLMSCISVSVGLGNV), 93 to 113 (GAFLIPYIIVLFLIGKPMYYL), 125 to 145 (TVKIWSVVPGFVGVGYGQAFA), and 146 to 166 (TICIITYYSSLLALTLFYLFV). Residues Asn-202 and Asn-205 are each glycosylated (N-linked (GlcNAc...) asparagine). 9 helical membrane passes run 241–261 (PDWKLTLALFVSWVVIFLVIM), 270–290 (AAYFLALFPYVVLFILLVRAV), 319–339 (AVVQCFFSLAVGSGPIIMFAS), 353–373 (IVTTLDTLTSLLGGITIFAIL), 413–433 (LFSVLFFFMLFVLGIGSIVAL), 459–479 (ICGFLMGLVYVTPGGQWILTL), 486–506 (TYVVFILAIFELAGIVWIYGM), 528–548 (CWSFFTPVMMIVIFIYSMVTI), and 565–585 (AGWLLFGIGAAQFPLWWMWYI).

Belongs to the sodium:neurotransmitter symporter (SNF) (TC 2.A.22) family.

It is found in the membrane. Unusual broad substrate spectrum amino acid:sodium cotransporter that promotes absorption of the D isomers of essential amino acids. Neutral amino acids are the preferred substrates, especially methionine and phenylalanine. This is Sodium-dependent nutrient amino acid transporter 1 from Drosophila pseudoobscura pseudoobscura (Fruit fly).